The primary structure comprises 425 residues: Type I restriction enzyme MjaVII specificity subunit (425 aa).

The target recognition domain 1 stretch occupies residues Lys9–Leu168. The tract at residues Glu169–Thr208 is central conserved region (CCR). Residues Glu169–Thr208 adopt a coiled-coil conformation. The interval Lys209–Leu368 is target recognition domain 2. Residues Glu369–Thr418 adopt a coiled-coil conformation. Residues Glu369–Thr418 are distal conserved region (DCR).

Belongs to the type-I restriction system S methylase family. As to quaternary structure, the type I restriction/modification system is composed of three polypeptides R, M and S.

Functionally, the specificity (S) subunit of a type I restriction enzyme; this subunit dictates DNA sequence specificity. The M and S subunits together form a methyltransferase (MTase) that methylates A-3 on the top and bottom strands of the sequence 5'-CAAN(7)TGG-3'. In the presence of the R subunit the complex can also act as an endonuclease, binding to the same target sequence but cutting the DNA some distance from this site. Whether the DNA is cut or modified depends on the methylation state of the target sequence. When the target site is unmodified, the DNA is cut. When the target site is hemimethylated, the complex acts as a maintenance MTase modifying the DNA so that both strands become methylated. After locating a non-methylated recognition site, the enzyme complex serves as a molecular motor that translocates DNA in an ATP-dependent manner until a collision occurs that triggers cleavage. This Methanocaldococcus jannaschii (strain ATCC 43067 / DSM 2661 / JAL-1 / JCM 10045 / NBRC 100440) (Methanococcus jannaschii) protein is Type I restriction enzyme MjaVII specificity subunit.